Reading from the N-terminus, the 256-residue chain is Thiazole synthase (256 aa).

K95 (schiff-base intermediate with DXP) is an active-site residue. 1-deoxy-D-xylulose 5-phosphate-binding positions include G156, 182–183 (AG), and 204–205 (NT).

Belongs to the ThiG family. As to quaternary structure, homotetramer. Forms heterodimers with either ThiH or ThiS.

It is found in the cytoplasm. It catalyses the reaction [ThiS sulfur-carrier protein]-C-terminal-Gly-aminoethanethioate + 2-iminoacetate + 1-deoxy-D-xylulose 5-phosphate = [ThiS sulfur-carrier protein]-C-terminal Gly-Gly + 2-[(2R,5Z)-2-carboxy-4-methylthiazol-5(2H)-ylidene]ethyl phosphate + 2 H2O + H(+). Its pathway is cofactor biosynthesis; thiamine diphosphate biosynthesis. Catalyzes the rearrangement of 1-deoxy-D-xylulose 5-phosphate (DXP) to produce the thiazole phosphate moiety of thiamine. Sulfur is provided by the thiocarboxylate moiety of the carrier protein ThiS. In vitro, sulfur can be provided by H(2)S. The polypeptide is Thiazole synthase (Enterobacter sp. (strain 638)).